We begin with the raw amino-acid sequence, 471 residues long: Glutamate--tRNA ligase (471 aa).

A 'HIGH' region motif is present at residues 9–19 (PSPTGYLHVGG). Zn(2+) contacts are provided by Cys-98, Cys-100, Cys-125, and His-127. Residues 237–241 (KLSKR) carry the 'KMSKS' region motif. Position 240 (Lys-240) interacts with ATP.

This sequence belongs to the class-I aminoacyl-tRNA synthetase family. Glutamate--tRNA ligase type 1 subfamily. In terms of assembly, monomer. Requires Zn(2+) as cofactor.

It localises to the cytoplasm. It carries out the reaction tRNA(Glu) + L-glutamate + ATP = L-glutamyl-tRNA(Glu) + AMP + diphosphate. In terms of biological role, catalyzes the attachment of glutamate to tRNA(Glu) in a two-step reaction: glutamate is first activated by ATP to form Glu-AMP and then transferred to the acceptor end of tRNA(Glu). The polypeptide is Glutamate--tRNA ligase (Salmonella arizonae (strain ATCC BAA-731 / CDC346-86 / RSK2980)).